The following is a 177-amino-acid chain: MSRVAKAPVVVPAGVDVKINGQVITIKGKNGELTRTLNDAVEVKHADNALTFGPRDGYADGWAQAGTARALLNSMVIGVTEGFTKKLQLVGVGYRAAVKGNVVNLSLGFSHPVDHQLPAGITAECPTQTEIVLKGADKQVIGQVAADLRAYRRPEPYKGKGVRYADEVVRTKEAKKK.

It belongs to the universal ribosomal protein uL6 family. In terms of assembly, part of the 50S ribosomal subunit.

This protein binds to the 23S rRNA, and is important in its secondary structure. It is located near the subunit interface in the base of the L7/L12 stalk, and near the tRNA binding site of the peptidyltransferase center. The polypeptide is Large ribosomal subunit protein uL6 (Salmonella newport (strain SL254)).